A 342-amino-acid chain; its full sequence is Trans-3-hydroxy-L-proline dehydratase (342 aa).

Ser-90 (proton acceptor) is an active-site residue. Substrate contacts are provided by residues 91–92, Asp-252, and 257–258; these read GS and GT.

This sequence belongs to the proline racemase family.

It catalyses the reaction trans-3-hydroxy-L-proline = 1-pyrroline-2-carboxylate + H2O. Its function is as follows. Catalyzes the dehydration of trans-3-hydroxy-L-proline (t3LHyp) to Delta(1)-pyrroline-2-carboxylate (Pyr2C). Is likely involved in a degradation pathway that converts t3LHyp to L-proline. Displays neither proline racemase activity nor 4-hydroxyproline 2-epimerase activity. The protein is Trans-3-hydroxy-L-proline dehydratase of Allorhizobium ampelinum (strain ATCC BAA-846 / DSM 112012 / S4) (Agrobacterium vitis (strain S4)).